The sequence spans 292 residues: Peroxisomal 2,4-dienoyl-CoA reductase SPS19 [(3E)-enoyl-CoA-producing] (292 aa).

The NADP(+) site is built by Ile36, Asp85, and Lys145. The active-site Proton donor is Ser162. Lys180 provides a ligand contact to NADP(+). Residue Lys180 is the Lowers pKa of active site Tyr of the active site. Lys188 participates in a covalent cross-link: Glycyl lysine isopeptide (Lys-Gly) (interchain with G-Cter in ubiquitin). An NADP(+)-binding site is contributed by Ile209. A Microbody targeting signal motif is present at residues Ser290–Leu292.

The protein belongs to the short-chain dehydrogenases/reductases (SDR) family. In terms of assembly, homodimer.

The protein localises to the peroxisome. It catalyses the reaction a (2E,4Z)-dienoyl-CoA + NADPH + H(+) = a 4,5-saturated-(3E)-enoyl-CoA + NADP(+). It carries out the reaction a (2E,4E)-dienoyl-CoA + NADPH + H(+) = a 4,5-saturated-(3E)-enoyl-CoA + NADP(+). Its function is as follows. Auxiliary enzyme of beta-oxidation. Participates in the degradation of unsaturated fatty enoyl-CoA esters having double bonds in both even- and odd-numbered positions in peroxisome. Catalyzes the NADP-dependent reduction of 2,4-dienoyl-CoA to yield trans-3-enoyl-CoA. Dispensable for growth and sporulation on solid acetate and oleate media, but is essential for these processes to occur on petroselineate. This chain is Peroxisomal 2,4-dienoyl-CoA reductase SPS19 [(3E)-enoyl-CoA-producing] (SPS19), found in Saccharomyces cerevisiae (strain ATCC 204508 / S288c) (Baker's yeast).